We begin with the raw amino-acid sequence, 222 residues long: uncharacterized protein (222 aa).

This is an uncharacterized protein from Methanocaldococcus jannaschii (strain ATCC 43067 / DSM 2661 / JAL-1 / JCM 10045 / NBRC 100440) (Methanococcus jannaschii).